Here is a 391-residue protein sequence, read N- to C-terminus: Digeranylgeranylglycerophospholipid reductase (391 aa).

Gly19, Asp38, Cys49, Ala50, Ala52, Arg99, Val123, Asp279, Gly291, and Ile292 together coordinate FAD. Val369 is an a 2,3-bis-O-(geranylgeranyl)-sn-glycerol 1-phospholipid binding site.

It belongs to the geranylgeranyl reductase family. DGGGPL reductase subfamily. FAD is required as a cofactor.

The enzyme catalyses a 2,3-bis-O-phytanyl-sn-glycerol 1-phospholipid + 8 A = a 2,3-bis-O-(geranylgeranyl)-sn-glycerol 1-phospholipid + 8 AH2. It catalyses the reaction 2,3-bis-O-(phytanyl)-sn-glycerol 1-phosphate + 8 A = 2,3-bis-O-(geranylgeranyl)-sn-glycerol 1-phosphate + 8 AH2. It carries out the reaction CDP-2,3-bis-O-(geranylgeranyl)-sn-glycerol + 8 AH2 = CDP-2,3-bis-O-(phytanyl)-sn-glycerol + 8 A. The catalysed reaction is archaetidylserine + 8 AH2 = 2,3-bis-O-phytanyl-sn-glycero-3-phospho-L-serine + 8 A. The protein operates within membrane lipid metabolism; glycerophospholipid metabolism. Is involved in the reduction of 2,3-digeranylgeranylglycerophospholipids (unsaturated archaeols) into 2,3-diphytanylglycerophospholipids (saturated archaeols) in the biosynthesis of archaeal membrane lipids. Catalyzes the formation of archaetidic acid (2,3-di-O-phytanyl-sn-glyceryl phosphate) from 2,3-di-O-geranylgeranylglyceryl phosphate (DGGGP) via the hydrogenation of each double bond of the isoprenoid chains. Is also probably able to reduce double bonds of geranyl groups in CDP-2,3-bis-O-(geranylgeranyl)-sn-glycerol and archaetidylserine, thus acting at various stages in the biosynthesis of archaeal membrane lipids. The polypeptide is Digeranylgeranylglycerophospholipid reductase (Methanococcus aeolicus (strain ATCC BAA-1280 / DSM 17508 / OCM 812 / Nankai-3)).